The chain runs to 425 residues: Ribosome biogenesis protein WDR12 homolog (425 aa).

Residues 7 to 93 are ubiquitin-like (UBL) domain; that stretch reads IQAKFFTKDE…ETIVHLEYLE (87 aa). 7 WD repeats span residues 105-142, 145-187, 194-233, 265-303, 305-344, 350-390, and 394-425; these read IHDD…RRLT, GHLG…NAVE, GHAR…TDTD, GHHE…MKSQ, AGSK…GTIV, SHAG…APLY, and GHED…FEHK. The interval 227 to 253 is disordered; it reads PDSTDTDHGQDGSEEGSRKKQKTVDGK. Basic and acidic residues predominate over residues 231 to 253; it reads DTDHGQDGSEEGSRKKQKTVDGK.

It belongs to the WD repeat WDR12/YTM1 family.

The protein localises to the nucleus. It is found in the nucleolus. The protein resides in the nucleoplasm. Its function is as follows. Required for maturation of ribosomal RNAs and formation of the large ribosomal subunit. The protein is Ribosome biogenesis protein WDR12 homolog of Ixodes scapularis (Black-legged tick).